A 233-amino-acid chain; its full sequence is Small ribosomal subunit protein uS2 (233 aa).

Belongs to the universal ribosomal protein uS2 family.

The polypeptide is Small ribosomal subunit protein uS2 (Clostridium botulinum (strain Hall / ATCC 3502 / NCTC 13319 / Type A)).